Here is a 243-residue protein sequence, read N- to C-terminus: Large ribosomal subunit protein uL2 (243 aa).

Residues 202–243 (HGGGRHQHVGQSSTVSRNAPPGAKVGSIAARKTGRAKIKDRR) are disordered. Positions 233–243 (KTGRAKIKDRR) are enriched in basic residues.

This sequence belongs to the universal ribosomal protein uL2 family. In terms of assembly, part of the 50S ribosomal subunit. Forms a bridge to the 30S subunit in the 70S ribosome.

One of the primary rRNA binding proteins. Required for association of the 30S and 50S subunits to form the 70S ribosome, for tRNA binding and peptide bond formation. It has been suggested to have peptidyltransferase activity; this is somewhat controversial. Makes several contacts with the 16S rRNA in the 70S ribosome. The polypeptide is Large ribosomal subunit protein uL2 (Cenarchaeum symbiosum (strain A)).